The chain runs to 130 residues: MSMQDPIADMLTRIRNGQAAHKVSVSMPSSKLKVAIANLLKEEGYIADIKVSGDVKPELEIELKYFQGKPVVELIQRVSRPGLRIYKKRGDLPKIMNGLGIAVVSTSKGVMTDRAARKAGMGGEIICYVA.

It belongs to the universal ribosomal protein uS8 family. As to quaternary structure, part of the 30S ribosomal subunit. Contacts proteins S5 and S12.

Functionally, one of the primary rRNA binding proteins, it binds directly to 16S rRNA central domain where it helps coordinate assembly of the platform of the 30S subunit. The chain is Small ribosomal subunit protein uS8 from Tolumonas auensis (strain DSM 9187 / NBRC 110442 / TA 4).